Here is a 624-residue protein sequence, read N- to C-terminus: Outer dynein arm-docking complex subunit 4 (624 aa).

TPR repeat units follow at residues 11-44 (FPSY…QSGD), 46-78 (NCLV…DPTF), 79-112 (CKGI…RPDR), 273-309 (LKSL…NQEE), 318-351 (GNLY…AKEH), 358-391 (SRAL…AKTT), 395-428 (TWLF…AEEE), and 435-468 (LNAS…AKLV). The interval 511-624 (MSQMDLQGAS…VQKLEKTKEE (114 aa)) is disordered. Basic and acidic residues-rich tracts occupy residues 520–557 (SEKE…DRKS), 576–588 (IRRE…RRLS), and 595–624 (PSED…TKEE).

As to quaternary structure, component of the outer dynein arm-docking complex along with ODAD1, ODAD2, and ODAD3. Interacts with ODAD1; this interaction may facilitate the recruitment and/or attachment of outer dynein arm docking complex proteins, including ODAD1, ODAD3 and ODAD2, to ciliary axonemes. Interacts with components of the IFT complex A, including IFT140, TTC21B/IFT139 and WDR19/IFT144, and the IFT complex B, including IFT46, IFT52 and IFT57. Interacts with CFAP53.

It localises to the cell projection. The protein localises to the cilium. The protein resides in the cytoplasm. Its subcellular location is the cytoskeleton. It is found in the cilium axoneme. Its function is as follows. Component of the outer dynein arm-docking complex (ODA-DC) that mediates outer dynein arms (ODA) binding onto the doublet microtubule. Plays an essential role for the assembly of ODA-DC and for the docking of ODA in ciliary axoneme. The protein is Outer dynein arm-docking complex subunit 4 (Odad4) of Mus musculus (Mouse).